Reading from the N-terminus, the 577-residue chain is MNQPQPYMDQHAPAPPPASNMTQYSNYGAPQPLQPATHGYGAPTYPQYGQYGQSMPPMQAGHPVSAPMQGQMVNSLPLPTMSAPQQSGGTQQFQQSFDTTGQIAPHGMKPRVTATLWEDEGSLCFQVEANGVCVARREDNHMINGTKLLNVAGMTRGRRDGILKSEKTRHVVKIGPMHLKGVWIPFDRALDFANKEKITELLYPLFVHNIGALLYHPTNQARQSIGNATMAARRPESSQEYMRTPQGTQAPALTHHHSMSNPINASMPPQPHSIAPHPASGRPQLDRAHTFPTPPASASSMPMTNGNMPNSYEYGSAGAVNSASTPPSNSQGMPQYQTSQPPYTQSYSTPGSYSQPQYTHQQPGVQRFGNIHSSPDGVKTEMGPPARAGAENDHPDHKVGGYGGQQDAEGEHEGEYTHTSASYGARRLSYNYKPNPAPGPLHQDSSHVSPEMTHSPHQNGSGRATPRTTNPYTGYNNTPQRQNQLPSSNLNYVMSSDARAGAPNGQEYAQQAYQPAPQYPAMNGIKRGREDDDQVDPYGRPSSALGEHKRQRTDPGAMSARPISQPHSIKAGGAVRR.

Residues 1 to 41 (MNQPQPYMDQHAPAPPPASNMTQYSNYGAPQPLQPATHGYG) form a disordered region. The span at 19–28 (SNMTQYSNYG) shows a compositional bias: polar residues. An HTH APSES-type domain is found at 111–217 (RVTATLWEDE…HNIGALLYHP (107 aa)). Residues 145–166 (GTKLLNVAGMTRGRRDGILKSE) constitute a DNA-binding region (H-T-H motif). Disordered regions lie at residues 228–487 (ATMA…QLPS) and 518–577 (QYPA…AVRR). Polar residues-rich tracts occupy residues 238–251 (SQEY…TQAP) and 319–333 (AVNS…SQGM). Residues 334–350 (PQYQTSQPPYTQSYSTP) are compositionally biased toward low complexity. The span at 351-364 (GSYSQPQYTHQQPG) shows a compositional bias: polar residues. The segment covering 390–399 (AENDHPDHKV) has biased composition (basic and acidic residues). Over residues 465 to 479 (TPRTTNPYTGYNNTP) the composition is skewed to low complexity. The tract at residues 526–552 (KRGREDDDQVDPYGRPSSALGEHKRQR) is nuclear localization domain.

Belongs to the EFG1/PHD1/stuA family.

The protein localises to the nucleus. Transcription factor that regulates asexual reproduction. Binds the StuA-response elements (StRE) with the consensus sequence 5'-(A/T)CGCG(T/A)N(A/C)-3' at the promoters of target genes. The chain is Cell pattern formation-associated protein stuA from Dothistroma septosporum (strain NZE10 / CBS 128990) (Red band needle blight fungus).